A 502-amino-acid polypeptide reads, in one-letter code: Glycerol kinase (502 aa).

Thr-14 contacts ADP. Thr-14, Thr-15, and Ser-16 together coordinate ATP. Residue Thr-14 participates in sn-glycerol 3-phosphate binding. An ADP-binding site is contributed by Arg-18. Residues Arg-84, Glu-85, Tyr-136, and Asp-246 each contribute to the sn-glycerol 3-phosphate site. Glycerol-binding residues include Arg-84, Glu-85, Tyr-136, Asp-246, and Gln-247. 2 residues coordinate ADP: Thr-268 and Gly-311. ATP is bound by residues Thr-268, Gly-311, Gln-315, and Gly-412. 2 residues coordinate ADP: Gly-412 and Asn-416.

It belongs to the FGGY kinase family. As to quaternary structure, homotetramer and homodimer (in equilibrium). Heterodimer with EIIA-Glc. Binds 1 zinc ion per glycerol kinase EIIA-Glc dimer. The zinc ion is important for dimerization.

The catalysed reaction is glycerol + ATP = sn-glycerol 3-phosphate + ADP + H(+). Its pathway is polyol metabolism; glycerol degradation via glycerol kinase pathway; sn-glycerol 3-phosphate from glycerol: step 1/1. With respect to regulation, activity of this regulatory enzyme is affected by several metabolites. Allosterically and non-competitively inhibited by fructose 1,6-bisphosphate (FBP) and unphosphorylated phosphocarrier protein EIIA-Glc (III-Glc), an integral component of the bacterial phosphotransferase (PTS) system. Key enzyme in the regulation of glycerol uptake and metabolism. Catalyzes the phosphorylation of glycerol to yield sn-glycerol 3-phosphate. This is Glycerol kinase from Escherichia coli O127:H6 (strain E2348/69 / EPEC).